We begin with the raw amino-acid sequence, 504 residues long: L-carnitine/gamma-butyrobetaine antiporter (504 aa).

A run of 12 helical transmembrane segments spans residues 10 to 30, 51 to 71, 92 to 112, 143 to 163, 195 to 215, 231 to 251, 263 to 283, 316 to 336, 347 to 367, 398 to 418, 446 to 466, and 475 to 495; these read IEPKVFFPPLIIVGILCWLTV, WGWAFEWYMVVMLFGWFWLVF, IFMMFASCTSAAVLFWGSIEI, GPLPWATYSFLSVAFAYFFFV, FYLVALIFAMGTSLGLATPLV, LDAIIITCWIILNAICVACGL, SYLSFLMLGWVFIVSGASFIM, WTVFYWAWWVIYAIQMSIFLA, LCFGMVMGLTASTWILWTVLG, WAALPLSTATMWGFFILCFIA, LLVRIGWSILVGIIGIVLLAL, and AIIAGGCPLFFVNIMVTLSFI.

Belongs to the BCCT transporter (TC 2.A.15) family. CaiT subfamily. As to quaternary structure, homotrimer.

It is found in the cell inner membrane. It catalyses the reaction 4-(trimethylamino)butanoate(in) + (R)-carnitine(out) = 4-(trimethylamino)butanoate(out) + (R)-carnitine(in). Its pathway is amine and polyamine metabolism; carnitine metabolism. Its function is as follows. Catalyzes the exchange of L-carnitine for gamma-butyrobetaine. The sequence is that of L-carnitine/gamma-butyrobetaine antiporter from Escherichia coli O157:H7.